The following is a 231-amino-acid chain: Sugar fermentation stimulation protein homolog (231 aa).

The protein belongs to the SfsA family.

The sequence is that of Sugar fermentation stimulation protein homolog from Citrifermentans bemidjiense (strain ATCC BAA-1014 / DSM 16622 / JCM 12645 / Bem) (Geobacter bemidjiensis).